Reading from the N-terminus, the 1242-residue chain is Reverse gyrase 1 (1242 aa).

The RG N-terminal-type zinc-finger motif lies at 6 to 46 (KVPPSIYTRSCPNCGGNISSQRLFNGSVCESCLKDDREFSN). Residues cysteine 16, cysteine 19, cysteine 34, and cysteine 37 each contribute to the Zn(2+) site. ATP-binding positions include glutamine 93 and 110 to 117 (APPGLGKT). A Helicase ATP-binding domain is found at 97 to 298 (TIRFLRGESF…SLMGFRPGSS (202 aa)). The short motif at 214–217 (DDVD) is the DEAD box element. The interval 615–1242 (LSVKTTLFIV…ELYNEIQTIS (628 aa)) is topoisomerase I. Residues 619 to 785 (TTLFIVESPN…NIKRAEFHEV (167 aa)) enclose the Toprim domain. Position 625 (glutamate 625) interacts with Mg(2+). The RG C-terminal-type; atypical zinc finger occupies 703–731 (IKKCEKGHQIVKDLSQNKCPICGSRIVTD). Residues cysteine 706, histidine 710, cysteine 721, and cysteine 724 each coordinate Zn(2+). Residue aspartate 754 coordinates Mg(2+). In terms of domain architecture, Topo IA-type catalytic spans 801–1242 (NDNLVKSQIV…ELYNEIQTIS (442 aa)). Tyrosine 965 serves as the catalytic O-(5'-phospho-DNA)-tyrosine intermediate.

In the N-terminal section; belongs to the DEAD box helicase family. DDVD subfamily. This sequence in the C-terminal section; belongs to the type IA topoisomerase family. As to quaternary structure, monomer. Zn(2+) is required as a cofactor. It depends on Mg(2+) as a cofactor.

The protein localises to the cytoplasm. The enzyme catalyses ATP + H2O = ADP + phosphate + H(+). With respect to regulation, at least one of the two reverse gyrase proteins is inhibited by actinomycin D. Highly sensitive to NaCl concentrations, maximal positive supercoiling is observed with 10 mM NaCl; as NaCl rises, supercoiling decreases. At 300 mM NaCl relaxes but does not introduce positive supercoils into negatively supercoiled substrate, at 400 mM NaCl does not relax DNA. Functionally, modifies the topological state of DNA by introducing positive supercoils in an ATP-dependent process. Increases the linking number in steps of +1. Involved in homeostatic control of DNA topology in balance with type II topoisomerase 6 (TopoVI); levels of TopoVI are constant at 80 and 88 degrees Celsius and TopoVI is probably less active at 88 degrees (characterized enzyme is from S.shibatae B12), so reverse gyrase mediates most of the fine-tuning of DNA topology. Changes the DNA linking number step-by-step in a distributive manner. At low protein to DNA ratios mostly relaxes negatively supercoiled substrate, as ratios rise more positive supercoils are introduced. At 90 degrees Celsius introduces 19 positive supercoils into pTZ18R DNA (probably 2860 bp), less than TopR2. Relaxes negatively supercoiled DNA in the absence of ATP. It cleaves transiently a single DNA strand and remains covalently bound to the 5' DNA end through a tyrosine residue. May be involved in DNA damage response. Its activity is inhibited by the DNA-binding protein 7d (Sso7d), suggesting that the Sso7d activity might counteract the overwinding effect of reverse gyrase. Its function is as follows. Resolves 4-way Holliday junctions (HJ) with 20 bases in each arm in vitro, distorting the junction. Very high protein levels are required, but total enzyme content of the cell (there are 2 reverse gyrases in this organism) is estimated to be 20-200 molecules/cell. HJ resolution does not require either ATPase activity or the active tyrosine. The individual domains do not resolve HJs but do so when mixed. Also unwinds a fork substrate. In terms of biological role, there are 2 genes for this protein in the cell. During exponential growth this is the less expressed isoform (about 52 molecules per cell at 80 degrees Celsius, about 28 molecules at 88 degrees Celsius); this isoform is more active at higher temperature. Grows actively at both 80 and 88 degrees Celsius; survives a long exposure at 45 degrees Celsius without DNA replication or cell division occurring. Experiments using whole cell extracts do not distinguish which isoform is present, the results are probably a mixture of the two forms. The polypeptide is Reverse gyrase 1 (Saccharolobus solfataricus (strain ATCC 35092 / DSM 1617 / JCM 11322 / P2) (Sulfolobus solfataricus)).